The primary structure comprises 115 residues: NADH-ubiquinone oxidoreductase chain 3 (115 aa).

3 helical membrane passes run 5-25 (TALL…FWFF), 55-75 (FFLV…LLPL), and 86-106 (IMML…AYEW).

The protein belongs to the complex I subunit 3 family. As to quaternary structure, core subunit of respiratory chain NADH dehydrogenase (Complex I) which is composed of 45 different subunits. Interacts with TMEM186. Interacts with TMEM242.

It is found in the mitochondrion inner membrane. It carries out the reaction a ubiquinone + NADH + 5 H(+)(in) = a ubiquinol + NAD(+) + 4 H(+)(out). Its function is as follows. Core subunit of the mitochondrial membrane respiratory chain NADH dehydrogenase (Complex I) which catalyzes electron transfer from NADH through the respiratory chain, using ubiquinone as an electron acceptor. Essential for the catalytic activity of complex I. This is NADH-ubiquinone oxidoreductase chain 3 from Peromyscus sejugis (Santa Cruz mouse).